The primary structure comprises 227 residues: Lectin (227 aa).

A signal peptide spans M1 to A28. Residue Q29 is modified to Pyrrolidone carboxylic acid. Chitin-binding type-1 domains are found at residues Q29 to S70, S71 to A113, D114 to P156, and E157 to K199. Intrachain disulfides connect C31–C46, C40–C52, C45–C59, C63–C68, C74–C89, C83–C95, C88–C102, C106–C111, C117–C132, C126–C138, C131–C145, C149–C154, C160–C175, C169–C181, C174–C188, and C192–C197. M38 to C40 is a binding site for substrate. S90 to Y101 contributes to the substrate binding site. S142 to E143 contacts substrate. The propeptide occupies D202 to V227. N211 carries an N-linked (GlcNAc...) asparagine glycan.

N-acetyl-D-glucosamine binding lectin. The protein is Lectin of Oryza sativa subsp. indica (Rice).